The sequence spans 486 residues: Betaine aldehyde dehydrogenase (486 aa).

The K(+) site is built by Thr23 and Asp90. 147–149 (GAW) contributes to the NAD(+) binding site. The Charge relay system role is filled by Lys159. Residues 173–176 (KPSE) and 226–229 (ESGT) each bind NAD(+). A K(+)-binding site is contributed by Leu241. Glu247 functions as the Proton acceptor in the catalytic mechanism. Positions 249, 281, and 382 each coordinate NAD(+). Catalysis depends on Cys281, which acts as the Nucleophile. Position 281 is a cysteine sulfenic acid (-SOH) (Cys281). The K(+) site is built by Lys452 and Gly455. The active-site Charge relay system is the Glu459.

It belongs to the aldehyde dehydrogenase family. As to quaternary structure, dimer of dimers. It depends on K(+) as a cofactor.

It carries out the reaction betaine aldehyde + NAD(+) + H2O = glycine betaine + NADH + 2 H(+). It participates in amine and polyamine biosynthesis; betaine biosynthesis via choline pathway; betaine from betaine aldehyde: step 1/1. Involved in the biosynthesis of the osmoprotectant glycine betaine. Catalyzes the irreversible oxidation of betaine aldehyde to the corresponding acid. The polypeptide is Betaine aldehyde dehydrogenase (Vibrio parahaemolyticus serotype O3:K6 (strain RIMD 2210633)).